The primary structure comprises 217 residues: Cytidylate kinase (217 aa).

ATP is bound at residue 10-18 (GPAGAGKST).

The protein belongs to the cytidylate kinase family. Type 1 subfamily.

It is found in the cytoplasm. It carries out the reaction CMP + ATP = CDP + ADP. The enzyme catalyses dCMP + ATP = dCDP + ADP. In Clostridium botulinum (strain Okra / Type B1), this protein is Cytidylate kinase.